A 261-amino-acid chain; its full sequence is Glucosamine-6-phosphate deaminase (261 aa).

Residue aspartate 67 is the Proton acceptor; for enolization step of the active site. Aspartate 136 serves as the catalytic For ring-opening step. Histidine 138 functions as the Proton acceptor; for ring-opening step in the catalytic mechanism. Glutamate 143 acts as the For ring-opening step in catalysis.

It belongs to the glucosamine/galactosamine-6-phosphate isomerase family. NagB subfamily.

It catalyses the reaction alpha-D-glucosamine 6-phosphate + H2O = beta-D-fructose 6-phosphate + NH4(+). Its pathway is amino-sugar metabolism; N-acetylneuraminate degradation; D-fructose 6-phosphate from N-acetylneuraminate: step 5/5. Functionally, catalyzes the reversible isomerization-deamination of glucosamine 6-phosphate (GlcN6P) to form fructose 6-phosphate (Fru6P) and ammonium ion. The sequence is that of Glucosamine-6-phosphate deaminase from Streptomyces coelicolor (strain ATCC BAA-471 / A3(2) / M145).